The primary structure comprises 98 residues: NADH-ubiquinone oxidoreductase chain 4L (98 aa).

Helical transmembrane passes span 1–21, 26–46, and 61–81; these read MTPTHMNITLAFTISLLGMLI, LMASLLCLEGMMMSLFIMTAV, and IIMLVFAACEAAVGLALLVSI.

The protein belongs to the complex I subunit 4L family. In terms of assembly, core subunit of respiratory chain NADH dehydrogenase (Complex I) which is composed of 45 different subunits.

It localises to the mitochondrion inner membrane. It catalyses the reaction a ubiquinone + NADH + 5 H(+)(in) = a ubiquinol + NAD(+) + 4 H(+)(out). Functionally, core subunit of the mitochondrial membrane respiratory chain NADH dehydrogenase (Complex I) which catalyzes electron transfer from NADH through the respiratory chain, using ubiquinone as an electron acceptor. Part of the enzyme membrane arm which is embedded in the lipid bilayer and involved in proton translocation. This Papio hamadryas (Hamadryas baboon) protein is NADH-ubiquinone oxidoreductase chain 4L (MT-ND4L).